We begin with the raw amino-acid sequence, 220 residues long: 2-hydroxy-3-keto-5-methylthiopentenyl-1-phosphate phosphatase (220 aa).

Belongs to the HAD-like hydrolase superfamily. MtnX family.

The catalysed reaction is 2-hydroxy-5-methylsulfanyl-3-oxopent-1-enyl phosphate + H2O = 1,2-dihydroxy-5-(methylsulfanyl)pent-1-en-3-one + phosphate. It functions in the pathway amino-acid biosynthesis; L-methionine biosynthesis via salvage pathway; L-methionine from S-methyl-5-thio-alpha-D-ribose 1-phosphate: step 4/6. In terms of biological role, dephosphorylates 2-hydroxy-3-keto-5-methylthiopentenyl-1-phosphate (HK-MTPenyl-1-P) yielding 1,2-dihydroxy-3-keto-5-methylthiopentene (DHK-MTPene). This Geobacillus thermodenitrificans (strain NG80-2) protein is 2-hydroxy-3-keto-5-methylthiopentenyl-1-phosphate phosphatase.